The sequence spans 481 residues: Zinc metalloproteinase/disintegrin (481 aa).

Residues 1-20 form the signal peptide; that stretch reads MIQVLLVTICLAVFPYQGSS. The propeptide occupies 21-190; sequence IILESGNVDD…KASQLYLTPE (170 aa). The Peptidase M12B domain maps to 197–392; sequence RYIKLAIVVD…DNPQCILNAP (196 aa). 3 disulfide bridges follow: Cys-308–Cys-387, Cys-349–Cys-371, and Cys-351–Cys-354. His-333 serves as a coordination point for Zn(2+). Glu-334 is a catalytic residue. Positions 337 and 343 each coordinate Zn(2+). Residues 393-408 constitute a propeptide that is removed on maturation; sequence LRTDTVSTPVSGNEFL. The Disintegrin domain occupies 400 to 481; it reads TPVSGNEFLE…GDCPRNPFHA (82 aa). 6 disulfides stabilise this stretch: Cys-414–Cys-429, Cys-416–Cys-424, Cys-423–Cys-446, Cys-437–Cys-443, Cys-442–Cys-467, and Cys-455–Cys-474. A Cell attachment site motif is present at residues 459–461; the sequence is RGD.

This sequence belongs to the venom metalloproteinase (M12B) family. P-II subfamily. P-IIa sub-subfamily. As to quaternary structure, monomer. Requires Zn(2+) as cofactor. Expressed by the venom gland.

The protein resides in the secreted. In terms of biological role, impairs hemostasis in the envenomed animal. Disintegrin elegantin-2a-f: inhibits platelet aggregation induced by ADP, thrombin, platelet-activating factor and collagen. Acts by inhibiting fibrinogen interaction with platelet receptors GPIIb/GPIIIa (ITGA2B/ITGB3). In Protobothrops elegans (Elegant pitviper), this protein is Zinc metalloproteinase/disintegrin.